Consider the following 214-residue polypeptide: Probable transaldolase (214 aa).

K83 functions as the Schiff-base intermediate with substrate in the catalytic mechanism.

The protein belongs to the transaldolase family. Type 3B subfamily.

It is found in the cytoplasm. It catalyses the reaction D-sedoheptulose 7-phosphate + D-glyceraldehyde 3-phosphate = D-erythrose 4-phosphate + beta-D-fructose 6-phosphate. It functions in the pathway carbohydrate degradation; pentose phosphate pathway; D-glyceraldehyde 3-phosphate and beta-D-fructose 6-phosphate from D-ribose 5-phosphate and D-xylulose 5-phosphate (non-oxidative stage): step 2/3. In terms of biological role, transaldolase is important for the balance of metabolites in the pentose-phosphate pathway. In Alkaliphilus metalliredigens (strain QYMF), this protein is Probable transaldolase.